The primary structure comprises 41 residues: Large ribosomal subunit protein bL36 (41 aa).

This sequence belongs to the bacterial ribosomal protein bL36 family.

The protein is Large ribosomal subunit protein bL36 of Bartonella tribocorum (strain CIP 105476 / IBS 506).